A 114-amino-acid chain; its full sequence is Large ribosomal subunit protein bL20c (114 aa).

The protein belongs to the bacterial ribosomal protein bL20 family.

It is found in the plastid. The protein resides in the chloroplast. Binds directly to 23S ribosomal RNA and is necessary for the in vitro assembly process of the 50S ribosomal subunit. It is not involved in the protein synthesizing functions of that subunit. This is Large ribosomal subunit protein bL20c from Tetradesmus obliquus (Green alga).